Here is a 478-residue protein sequence, read N- to C-terminus: 2,5-dioxopentanoate dehydrogenase (478 aa).

Residues 148-149 (WN), 172-175 (KPAT), and 225-226 (GS) contribute to the NADP(+) site. Glutamate 249 acts as the Proton acceptor in catalysis. Cysteine 283 functions as the Nucleophile in the catalytic mechanism. Glutamate 379 contacts NADP(+).

The protein belongs to the aldehyde dehydrogenase family. In terms of assembly, homotetramer.

It carries out the reaction 2,5-dioxopentanoate + NADP(+) + H2O = 2-oxoglutarate + NADPH + 2 H(+). In terms of biological role, 2,5-dioxopentanoate dehydrogenase involved in the degradation of pentoses such as D-arabinose or D-xylose, a major component of hemicelluloses such as xylan. Catalyzes the fifth reaction in the pentose utilization pathway through dehydratation of 2,5-dioxopentanoate into 2-oxoglutarate. Also shows dehydrogenase activity toward glycolaldehyde and DL-glyceraldehyde. The polypeptide is 2,5-dioxopentanoate dehydrogenase (Saccharolobus solfataricus (strain ATCC 35092 / DSM 1617 / JCM 11322 / P2) (Sulfolobus solfataricus)).